A 332-amino-acid polypeptide reads, in one-letter code: Ornithine carbamoyltransferase, catabolic (332 aa).

Residues 60–63, Q87, R111, and 138–141 each bind carbamoyl phosphate; these read STRT and HPTQ. L-ornithine-binding positions include N170, D230, and 234 to 235; that span reads SM. Carbamoyl phosphate-binding positions include 271 to 272 and R316; that span reads CL.

Belongs to the aspartate/ornithine carbamoyltransferase superfamily. OTCase family.

The protein localises to the cytoplasm. The catalysed reaction is carbamoyl phosphate + L-ornithine = L-citrulline + phosphate + H(+). It functions in the pathway amino-acid degradation; L-arginine degradation via ADI pathway; carbamoyl phosphate from L-arginine: step 2/2. Its function is as follows. Reversibly catalyzes the transfer of the carbamoyl group from carbamoyl phosphate (CP) to the N(epsilon) atom of ornithine (ORN) to produce L-citrulline. This Bacillus cereus (strain ATCC 14579 / DSM 31 / CCUG 7414 / JCM 2152 / NBRC 15305 / NCIMB 9373 / NCTC 2599 / NRRL B-3711) protein is Ornithine carbamoyltransferase, catabolic (arcB).